The sequence spans 308 residues: MKPRFDIIRASRWFFLLSGAITVAGVIVFALFGFNLSTDFKSGSEVQFELNQRVPEARVRQMFASIGLPLGDTSLTVGGIQQNVVMVTLPEQLTAKQISEIQAAEHRFFPDAKQDIQVNSVDPFVAEQTARKAVYAVLAAAACIVVYIAIRFEFRFAISGIIALLHDAFIVLAAFALLRREVDLTFVAALLTIVGYSINDTIVIFDRIRENLKIDKPETVDELRAVVNKSLWQVMNRSIRTVLTVLIAAVILYFFGGISIRNFTFALIIGLVSGAYSSIFIASPIWVAWRSRSMKKATRGDKAAPIPE.

Transmembrane regions (helical) follow at residues 14–34 (FFLL…LFGF), 134–154 (VYAV…RFEF), 158–178 (ISGI…FALL), 185–205 (TFVA…IVIF), 238–258 (SIRT…FGGI), and 267–287 (LIIG…PIWV).

This sequence belongs to the SecD/SecF family. SecF subfamily. Forms a complex with SecD. Part of the essential Sec protein translocation apparatus which comprises SecA, SecYEG and auxiliary proteins SecDF. Other proteins may also be involved.

Its subcellular location is the cell membrane. Part of the Sec protein translocase complex. Interacts with the SecYEG preprotein conducting channel. SecDF uses the proton motive force (PMF) to complete protein translocation after the ATP-dependent function of SecA. In Alicyclobacillus acidocaldarius subsp. acidocaldarius (strain ATCC 27009 / DSM 446 / BCRC 14685 / JCM 5260 / KCTC 1825 / NBRC 15652 / NCIMB 11725 / NRRL B-14509 / 104-IA) (Bacillus acidocaldarius), this protein is Protein translocase subunit SecF.